Reading from the N-terminus, the 152-residue chain is MLTLGNLSPQEGSTKQRKRLGRGPGSGHGKTAGRGHKGFKSRSGSGIKPGFEGGQMPLQRRLPKRGFTNIFKKEFSLVALSQLDKFEAGVVVSPAELVEAGMVKKGTLIKILANGEITKAVTVKVDKISSQAKAQIEAAGGTVVLTEVTAAE.

Residues 1 to 13 (MLTLGNLSPQEGS) show a composition bias toward polar residues. The segment at 1–62 (MLTLGNLSPQ…GGQMPLQRRL (62 aa)) is disordered. Positions 31 to 40 (TAGRGHKGFK) are enriched in basic residues.

It belongs to the universal ribosomal protein uL15 family. As to quaternary structure, part of the 50S ribosomal subunit.

Binds to the 23S rRNA. The polypeptide is Large ribosomal subunit protein uL15 (Desulfotalea psychrophila (strain LSv54 / DSM 12343)).